A 445-amino-acid chain; its full sequence is Neuropeptide Y receptor type 5 (445 aa).

Residues 1-42 lie on the Extracellular side of the membrane; the sequence is MDLELDEYYNKTLATENNTAATRNSDFPVWDDYKSSVDDLQY. Residues Asn-10 and Asn-17 are each glycosylated (N-linked (GlcNAc...) asparagine). A helical transmembrane segment spans residues 43-63; sequence FLIGLYTFVSLLGFMGNLLIL. Over 64 to 77 the chain is Cytoplasmic; sequence MALMKKRNQKTTVN. The chain crosses the membrane as a helical span at residues 78-98; the sequence is FLIGNLAFSDILVVLFCSPFT. Over 99–117 the chain is Extracellular; that stretch reads LTSVLLDQWMFGKVMCHIM. Cysteines 114 and 198 form a disulfide. A helical membrane pass occupies residues 118 to 138; it reads PFLQCVSVLVSTLILISIAIV. Over 139–156 the chain is Cytoplasmic; sequence RYHMIKHPISNNLTANHG. A helical transmembrane segment spans residues 157–177; it reads YFLIATVWTLGFAICSPLPVF. The Extracellular portion of the chain corresponds to 178-208; sequence HSLVELQETFGSALLSSRYLCVESWPSDSYR. The helical transmembrane segment at 209–229 threads the bilayer; sequence IAFTISLLLVQYILPLVCLTV. Residues 230-369 are Cytoplasmic-facing; that stretch reads SHTSVCRSIS…KKRSRSVFYR (140 aa). The helical transmembrane segment at 370 to 390 threads the bilayer; sequence LTILILVFAVSWMPLHLFHVV. The Extracellular portion of the chain corresponds to 391–407; the sequence is TDFNDNLISNRHFKLVY. The chain crosses the membrane as a helical span at residues 408 to 428; the sequence is CICHLLGMMSCCLNPILYGFL. Topologically, residues 429–445 are cytoplasmic; it reads NNGIKADLVSLIHCLHM. Cys-442 carries the S-palmitoyl cysteine lipid modification.

It belongs to the G-protein coupled receptor 1 family. In terms of tissue distribution, brain; hypothalamus.

It localises to the cell membrane. Functionally, receptor for neuropeptide Y and peptide YY. The activity of this receptor is mediated by G proteins that inhibit adenylate cyclase activity. Seems to be associated with food intake. Could be involved in feeding disorders. The protein is Neuropeptide Y receptor type 5 (NPY5R) of Homo sapiens (Human).